A 179-amino-acid chain; its full sequence is Peptidyl-tRNA hydrolase 2, mitochondrial (179 aa).

The helical transmembrane segment at 15-37 threads the bilayer; that stretch reads STLGLAVGVACGMCLGWSLRVCF. Glycyl lysine isopeptide (Lys-Gly) (interchain with G-Cter in ubiquitin) cross-links involve residues K47, K76, K81, K95, K106, K115, K171, and K177.

Belongs to the PTH2 family. Monomer. In terms of processing, ubiquitinated by PRKN during mitophagy, leading to its degradation and enhancement of mitophagy. Deubiquitinated by USP30.

The protein resides in the mitochondrion outer membrane. The catalysed reaction is an N-acyl-L-alpha-aminoacyl-tRNA + H2O = an N-acyl-L-amino acid + a tRNA + H(+). Functionally, peptidyl-tRNA hydrolase which releases tRNAs from the ribosome during protein synthesis. Promotes caspase-independent apoptosis by regulating the function of two transcriptional regulators, AES and TLE1. The protein is Peptidyl-tRNA hydrolase 2, mitochondrial (PTRH2) of Homo sapiens (Human).